The primary structure comprises 98 residues: NADH-ubiquinone oxidoreductase chain 4L (98 aa).

Helical transmembrane passes span 2–22, 29–49, and 61–81; these read PSISININLAFAAALLGMLMF, SLLCLEGMMLSMFTLSTLTIL, and ILLLVFAACEAAIGLALLVMV.

This sequence belongs to the complex I subunit 4L family. Core subunit of respiratory chain NADH dehydrogenase (Complex I) which is composed of 45 different subunits.

It is found in the mitochondrion inner membrane. It carries out the reaction a ubiquinone + NADH + 5 H(+)(in) = a ubiquinol + NAD(+) + 4 H(+)(out). Functionally, core subunit of the mitochondrial membrane respiratory chain NADH dehydrogenase (Complex I) which catalyzes electron transfer from NADH through the respiratory chain, using ubiquinone as an electron acceptor. Part of the enzyme membrane arm which is embedded in the lipid bilayer and involved in proton translocation. This chain is NADH-ubiquinone oxidoreductase chain 4L (MT-ND4L), found in Microcebus mittermeieri (Mittermeier's mouse lemur).